The sequence spans 402 residues: Shaggy-related protein kinase GSK2 (402 aa).

A disordered region spans residues 1-38; it reads MDQPAPAPEPMLLDAQPPAAVACDKKQQEGEAPYAEGN. Residues 63–347 enclose the Protein kinase domain; it reads YMAERVVGTG…ALDACAHPFF (285 aa). Residues 69-77 and lysine 92 each bind ATP; that span reads VGTGSFGIV. The active-site Proton acceptor is the aspartate 188.

The protein belongs to the protein kinase superfamily. CMGC Ser/Thr protein kinase family. GSK-3 subfamily. Interacts with DLT. Interacts with OFP8. Interacts with GRF4. Interacts with PUB24. Interacts with SMOS1. Autophosphorylated. As to expression, expressed in lamina joints, vascular tissue and nodes.

It is found in the cytoplasm. The protein resides in the nucleus. It carries out the reaction L-seryl-[protein] + ATP = O-phospho-L-seryl-[protein] + ADP + H(+). The enzyme catalyses L-threonyl-[protein] + ATP = O-phospho-L-threonyl-[protein] + ADP + H(+). Functionally, serine-threonine kinase that acts as a negative regulator of brassinosteroid (BR) signaling. Phosphorylates DLT and BZR1, two positive regulators that mediates several BR responses. Phosphorylation of DLT and BZR1 inhibits their activities in BR signaling. Phosphorylates OFP8, a positive regulator of BR responses. Phosphorylated OFP8 shuttles from the nucleus to the cytoplasm where it is degraded by the proteasome. Phosphorylates the E3 ubiquitin-protein ligase PUB24, a negative regulator of BR signaling, which targets BZR1 and promotes its degradation via the 26S proteasome. Phosphorylation of PUB24 increases its stability. Phosphorylates the AP2-ERF transcription factor SMOS1, a positive regulator of BR signaling, which cooperatively functions in a transactivating complex with BZR1 to enhance the transcription of BR biosynthetic genes. Phosphorylation of SMOS1 leads to its degradation by an unknown mechanism. The sequence is that of Shaggy-related protein kinase GSK2 from Oryza sativa subsp. japonica (Rice).